Reading from the N-terminus, the 1843-residue chain is Cilia- and flagella-associated protein 44 (1843 aa).

A disordered region spans residues 1–86; that stretch reads MKEPDDQDTS…PPVEVKEEPE (86 aa). The segment covering 29–39 has biased composition (polar residues); it reads LKSSQDTTADS. A compositionally biased stretch (acidic residues) spans 41 to 58; it reads TDGEESYLGDDLDLDDMD. WD repeat units follow at residues 214 to 255, 258 to 297, 308 to 346, 353 to 390, 456 to 495, 497 to 541, and 561 to 600; these read GAEK…PILR, AFSQDVFKVTFNPDNDEQLTTSGSGHIKFWEMAFTFTGLK, TSTSDIEGYAELPDGKVLSGSEWGNLLLWEGSLIKVELC, CHSGSINQIMLDEGEVITAGSDGSVRIWDFETIDTADV, FHSGPIAALAVSPLTYLMATTAMDCSVRVYDFSSKNPLVH, KFKQ…GLTV, and PHTDEVTALAYERDGDILATGSEDKTVFFFDVEKEYKPIG. Residues 701–726 form a disordered region; sequence REAFGEEEIPEEETSEEGEEEEPPLP. Acidic residues predominate over residues 705–724; that stretch reads GEEEIPEEETSEEGEEEEPP. WD repeat units lie at residues 790–829 and 842–881; these read TEDNPIRNITFSNDQTMMFCGMTNGAIRVYVLSENDPFLV and NNYGSIKSITSSFDDQYLLTAGEDGNIFVFDIFSEFIVPK. 3 disordered regions span residues 1040-1086, 1266-1291, and 1488-1524; these read YSKL…SVLE, QRKQKKRQDKSSSKQSGTGSGGSAGG, and KEVEGDADEDEESEESSEEESSLESDEDASGSEDDVF. Basic and acidic residues predominate over residues 1047–1071; it reads SQSERRQSKMERLEKEGPGKKESQR. Residue S1069 is modified to Phosphoserine. Residues 1072-1081 are compositionally biased toward polar residues; that stretch reads DTGGSISLQE. Over residues 1492–1524 the composition is skewed to acidic residues; sequence GDADEDEESEESSEEESSLESDEDASGSEDDVF. Coiled-coil stretches lie at residues 1548-1603 and 1631-1665; these read RLDI…RLNE and LVFSNHSLDRLQERIVQLQEENAKQQKLNKECRER. The stretch at 1699-1744 is one WD 10 repeat; sequence IDLEALQTLSVNTTLEELKIKKLRKELSNAKELRMWEEKIAQVRWD.

It belongs to the CFAP44 family. As to expression, expressed in testis.

It localises to the cell projection. The protein localises to the cilium. Its subcellular location is the flagellum. It is found in the cytoplasm. The protein resides in the cytoskeleton. It localises to the flagellum axoneme. Its function is as follows. Flagellar protein involved in sperm flagellum axoneme organization and function. In Mus musculus (Mouse), this protein is Cilia- and flagella-associated protein 44.